The sequence spans 104 residues: Large ribosomal subunit protein uL24 (104 aa).

It belongs to the universal ribosomal protein uL24 family. Part of the 50S ribosomal subunit.

Functionally, one of two assembly initiator proteins, it binds directly to the 5'-end of the 23S rRNA, where it nucleates assembly of the 50S subunit. One of the proteins that surrounds the polypeptide exit tunnel on the outside of the subunit. This Salmonella paratyphi A (strain ATCC 9150 / SARB42) protein is Large ribosomal subunit protein uL24.